The following is a 429-amino-acid chain: UDP-N-acetylglucosamine 1-carboxyvinyltransferase (429 aa).

Residue 22–23 coordinates phosphoenolpyruvate; the sequence is KN. R102 provides a ligand contact to UDP-N-acetyl-alpha-D-glucosamine. Catalysis depends on C126, which acts as the Proton donor. C126 bears the 2-(S-cysteinyl)pyruvic acid O-phosphothioketal mark. Residues 131–135, D316, and I338 contribute to the UDP-N-acetyl-alpha-D-glucosamine site; that span reads RPVDL.

It belongs to the EPSP synthase family. MurA subfamily.

Its subcellular location is the cytoplasm. The enzyme catalyses phosphoenolpyruvate + UDP-N-acetyl-alpha-D-glucosamine = UDP-N-acetyl-3-O-(1-carboxyvinyl)-alpha-D-glucosamine + phosphate. The protein operates within cell wall biogenesis; peptidoglycan biosynthesis. Functionally, cell wall formation. Adds enolpyruvyl to UDP-N-acetylglucosamine. The sequence is that of UDP-N-acetylglucosamine 1-carboxyvinyltransferase from Afipia carboxidovorans (strain ATCC 49405 / DSM 1227 / KCTC 32145 / OM5) (Oligotropha carboxidovorans).